Consider the following 142-residue polypeptide: uncharacterized protein (142 aa).

N-linked (GlcNAc...) asparagine; by host glycans are attached at residues Asn-29 and Asn-67. A helical membrane pass occupies residues 88 to 108 (VFYLGYPVIFIIGVTYFSIIA).

Its subcellular location is the membrane. This is an uncharacterized protein from Acanthamoeba polyphaga mimivirus (APMV).